The sequence spans 169 residues: Gamma-crystallin 2 (169 aa).

Beta/gamma crystallin 'Greek key' domains lie at 1–34 (YEDR…KVDS) and 35–77 (GCWM…KVIP). The connecting peptide stretch occupies residues 78-82 (QQKGP). Beta/gamma crystallin 'Greek key' domains are found at residues 83-123 (HKMK…NVLE) and 124-166 (GHWI…RRVL).

Belongs to the beta/gamma-crystallin family. As to quaternary structure, monomer.

Functionally, crystallins are the dominant structural components of the vertebrate eye lens. The sequence is that of Gamma-crystallin 2 from Rana temporaria (European common frog).